Here is a 155-residue protein sequence, read N- to C-terminus: Late embryogenesis abundant protein 2 (155 aa).

The interval 1 to 155 (MTSHDQSYRA…DKDHFPTNRH (155 aa)) is disordered. 2 stretches are compositionally biased toward basic and acidic residues: residues 11–21 (GEAKGRTEEKT) and 28–39 (IEDKAQAAKEKA). A compositionally biased stretch (low complexity) spans 40 to 78 (QQAAQTAKDKTSQTAQAAKEKTQQTAQAAKDKTQQTTQA). 2 consecutive repeat copies span residues 53–63 (TAQAAKEKTQQ) and 64–74 (TAQAAKDKTQQ). Residues 53 to 74 (TAQAAKEKTQQTAQAAKDKTQQ) form a 2 X 11 AA approximate tandem repeats of T-A-Q-A-A-K-E-K-T-Q-Q region. The span at 79–95 (TKEKAQDTTGRAKEKGS) shows a compositional bias: basic and acidic residues. Polar residues predominate over residues 97 to 120 (MGQSTKETAQSGKDNSAGFLQQTG). Residues 144 to 155 (DQDKDHFPTNRH) show a composition bias toward basic and acidic residues.

Belongs to the LEA type 4 family. As to expression, highest expression is found in seeds. No expression detected in adult tissues.

The sequence is that of Late embryogenesis abundant protein 2 from Cicer arietinum (Chickpea).